A 119-amino-acid chain; its full sequence is Large ribosomal subunit protein uL24 (119 aa).

The protein belongs to the universal ribosomal protein uL24 family. As to quaternary structure, part of the 50S ribosomal subunit.

One of two assembly initiator proteins, it binds directly to the 5'-end of the 23S rRNA, where it nucleates assembly of the 50S subunit. Its function is as follows. One of the proteins that surrounds the polypeptide exit tunnel on the outside of the subunit. The polypeptide is Large ribosomal subunit protein uL24 (Arthrobacter sp. (strain FB24)).